The chain runs to 620 residues: Membrane protein insertase YidC (620 aa).

The next 6 membrane-spanning stretches (helical) occupy residues 5 to 25 (QIIG…FMST), 343 to 363 (LGWP…FDGL), 366 to 386 (VFSS…LVLL), 436 to 456 (LSGC…FNFF), 482 to 502 (LPFT…LMTI), and 529 to 549 (PVVF…YYFV).

This sequence belongs to the OXA1/ALB3/YidC family. Type 1 subfamily. Interacts with the Sec translocase complex via SecD. Specifically interacts with transmembrane segments of nascent integral membrane proteins during membrane integration.

Its subcellular location is the cell inner membrane. Its function is as follows. Required for the insertion and/or proper folding and/or complex formation of integral membrane proteins into the membrane. Involved in integration of membrane proteins that insert both dependently and independently of the Sec translocase complex, as well as at least some lipoproteins. Aids folding of multispanning membrane proteins. This chain is Membrane protein insertase YidC, found in Cytophaga hutchinsonii (strain ATCC 33406 / DSM 1761 / CIP 103989 / NBRC 15051 / NCIMB 9469 / D465).